A 318-amino-acid chain; its full sequence is MDEDEKKDMCPICKTDRYLSPDMKFLINPECYHKICESCVDRIFSLGPAQCPYEGCDKILRRNKFKTQIFDDVGVEKEVDIRKRVFNVFNKTLEDFDNNQDDYDKYLEEVEDIIYNLDHGIDMEKTEERLRTYEELNKQLIMANLERSKQDVANFEQRQKFEKEMKLKKRLLEKQIEEEERANREWAKREIVNQLTVNEDAEEVIENVKKTVKLKKSSARRKLEELNKVLRNNPYMTMTNGRMKKKDTVPFTPFNGDRDLHKRYELVENEYNDSFIRDLQKKKEYIASGFRADFIYDRMLTEAFMGLGCIISEELQSS.

An RING-type zinc finger spans residues 10 to 55 (CPICKTDRYLSPDMKFLINPECYHKICESCVDRIFSLGPAQCPYEG).

Its subcellular location is the nucleus. Its function is as follows. Acts as a component of the general transcription and DNA repair factor IIH (TFIIH or factor B), which is essential for both basal and activated transcription, and is involved in nucleotide excision repair (NER) of damaged DNA. TFIIH as CTD kinase activity and DNA-dependent ATPase activity, and is essential for polymerase II transcription. The sequence is that of RNA polymerase II transcription factor B subunit 3 (TFB3) from Kluyveromyces lactis (strain ATCC 8585 / CBS 2359 / DSM 70799 / NBRC 1267 / NRRL Y-1140 / WM37) (Yeast).